A 411-amino-acid polypeptide reads, in one-letter code: LL-diaminopimelate aminotransferase (411 aa).

The substrate site is built by tyrosine 16 and glycine 43. Pyridoxal 5'-phosphate-binding positions include tyrosine 73, 109 to 110 (AK), tyrosine 133, asparagine 188, tyrosine 219, and 247 to 249 (SYS). The substrate site is built by lysine 110, tyrosine 133, and asparagine 188. Residue lysine 250 is modified to N6-(pyridoxal phosphate)lysine. Residues arginine 258 and asparagine 293 each contribute to the pyridoxal 5'-phosphate site. Substrate contacts are provided by asparagine 293 and arginine 389.

It belongs to the class-I pyridoxal-phosphate-dependent aminotransferase family. LL-diaminopimelate aminotransferase subfamily. In terms of assembly, homodimer. Pyridoxal 5'-phosphate is required as a cofactor.

The catalysed reaction is (2S,6S)-2,6-diaminopimelate + 2-oxoglutarate = (S)-2,3,4,5-tetrahydrodipicolinate + L-glutamate + H2O + H(+). The protein operates within amino-acid biosynthesis; L-lysine biosynthesis via DAP pathway; LL-2,6-diaminopimelate from (S)-tetrahydrodipicolinate (aminotransferase route): step 1/1. Involved in the synthesis of meso-diaminopimelate (m-DAP or DL-DAP), required for both lysine and peptidoglycan biosynthesis. Catalyzes the direct conversion of tetrahydrodipicolinate to LL-diaminopimelate. In Methanosphaera stadtmanae (strain ATCC 43021 / DSM 3091 / JCM 11832 / MCB-3), this protein is LL-diaminopimelate aminotransferase.